The primary structure comprises 596 residues: Nuclear receptor subfamily 2 group C member 2 (596 aa).

S19 is modified (phosphoserine; by MAPK). S46 is subject to Phosphoserine. S55 and S68 each carry phosphoserine; by MAPK. The residue at position 98 (S98) is a Phosphoserine. Positions V114–S189 form a DNA-binding region, nuclear receptor. NR C4-type zinc fingers lie at residues C117–C137 and C153–C177. Residue K192 forms a Glycyl lysine isopeptide (Lys-Gly) (interchain with G-Cter in SUMO2) linkage. S219 is subject to Phosphoserine. K231 is subject to N6-acetyllysine. Residues G341–E583 form the NR LBD domain.

This sequence belongs to the nuclear hormone receptor family. NR2 subfamily. Homodimer; can bind DNA as homodimer. Heterodimer; binds DNA as a heterodimer with NR2C1 required for chromatin remodeling and for binding to promoter regions such as globin DR1 repeats. Interacts with NR2C2AP; the interaction represses selective NR2C2-mediated transcriptional activity. Interacts with PCAF; the interaction preferentially occurs on the non-phosphorylated form and induces NR2C2-mediated transactivation activity and does not require the ligand-binding domain. Interacts (MAPK-mediated phosphorylated form) with NRIP1; the interaction promotes repression of NR2C2-mediated activity. Interacts with NLRP10. Interacts (via ligand-binding region) with transcriptional corepressor JAZF1; the interaction promotes NR2C2-mediated transcriptional repression. In terms of processing, phosphorylation on Ser-19 and Ser-68 is an important regulator of NR2C2-mediated transcriptional activity. Phosphorylation on these residues recruits the corepressor, NRIP1, leading to transcripional repression, whereas the non-phosphorylated form preferentially recruits the coactivator, PCAF. In terms of tissue distribution, expressed in hepatocytes. Also expressed in granule cells of the hippocampus and the cerebellum.

Its subcellular location is the nucleus. Functionally, orphan nuclear receptor that can act as a repressor or activator of transcription. An important repressor of nuclear receptor signaling pathways such as retinoic acid receptor, retinoid X, vitamin D3 receptor, thyroid hormone receptor and estrogen receptor pathways. May regulate gene expression during the late phase of spermatogenesis. Activates transcriptional activity of LHCG and is antagonist of PPARA-mediated transactivation. Together with NR2C1, forms the core of the DRED (direct repeat erythroid-definitive) complex that represses embryonic and fetal globin transcription including that of GATA1. Binds to hormone response elements (HREs) consisting of two 5'-AGGTCA-3' half site direct repeat consensus sequences. Plays a fundamental role in early embryonic development and embryonic stem cells. Required for normal spermatogenesis and cerebellum development. Appears to be important for neurodevelopmentally regulated behavior. The protein is Nuclear receptor subfamily 2 group C member 2 (Nr2c2) of Rattus norvegicus (Rat).